Consider the following 25-residue polypeptide: Gamma-conotoxin PiVIIA (25 aa).

3 cysteine pairs are disulfide-bonded: Cys1-Cys15, Cys8-Cys19, and Cys14-Cys24. Pro4 is modified (4-hydroxyproline). Residues Glu13 and Glu20 each carry the 4-carboxyglutamate modification.

The protein belongs to the conotoxin O2 superfamily. As to expression, expressed by the venom duct.

Its subcellular location is the secreted. Micromolar concentrations of PiVIIA increase the magnitude of the macroscopic calcium current in DRG neurons from rat. An increase, even modest of the calcium current, may have a significant impact in the excitability and electrical activity of neurons, and may set up PiVIIA as a member of the pharmacological family of the gamma-conotoxins. In Conus princeps (Prince cone), this protein is Gamma-conotoxin PiVIIA.